Here is a 327-residue protein sequence, read N- to C-terminus: L-serine dehydratase/L-threonine deaminase (327 aa).

N-acetylalanine is present on Ala2. N6-(pyridoxal phosphate)lysine is present on Lys41. Pro128 is a pyridoxal 5'-phosphate binding site.

Belongs to the serine/threonine dehydratase family. Homodimer. It depends on pyridoxal 5'-phosphate as a cofactor.

It is found in the cytoplasm. The enzyme catalyses L-serine = pyruvate + NH4(+). It carries out the reaction L-threonine = 2-oxobutanoate + NH4(+). It functions in the pathway carbohydrate biosynthesis; gluconeogenesis. Functionally, catalyzes the pyridoxal-phosphate-dependent dehydrative deamination of L-threonine and L-serine to ammonia and alpha-ketobutyrate and pyruvate, respectively. The chain is L-serine dehydratase/L-threonine deaminase (Sds) from Mus musculus (Mouse).